The chain runs to 59 residues: Large ribosomal subunit protein bL32 (59 aa).

The segment at 1–59 is disordered; sequence MAVQQNRKTPSKRGMRRSHDALSGPALSVEPQTGETHRRHHVSPDGYYRGRKVMQGRED. Basic residues predominate over residues 49–59; it reads RGRKVMQGRED.

It belongs to the bacterial ribosomal protein bL32 family.

The protein is Large ribosomal subunit protein bL32 of Alkalilimnicola ehrlichii (strain ATCC BAA-1101 / DSM 17681 / MLHE-1).